Consider the following 668-residue polypeptide: Protein ENTREP3 (668 aa).

3 helical membrane-spanning segments follow: residues 34-54 (LLTL…FSMV), 67-87 (SCPS…IVSW), and 91-111 (FTLV…LSMA). Residue asparagine 160 is glycosylated (N-linked (GlcNAc...) asparagine). A helical transmembrane segment spans residues 174-194 (LFSVCGLTICAAIICTLSAIV). Phosphoserine is present on residues serine 358 and serine 389. 3 disordered regions span residues 386–419 (FEES…PTAA), 442–503 (RVPR…SSDT), and 550–570 (SAEK…SGPA). Low complexity predominate over residues 398–407 (AARSYSCSAP). A Phosphoserine modification is found at serine 493. A Phosphoserine modification is found at serine 574. 2 disordered regions span residues 597–620 (KAPD…WGRP) and 645–668 (GRRL…ETGL). Positions 655–668 (HSLSLNGGSRETGL) are enriched in polar residues.

The protein belongs to the ENTREP family. As to quaternary structure, may interact with WWOX. Widely expressed.

Its subcellular location is the membrane. This is Protein ENTREP3 from Homo sapiens (Human).